The chain runs to 238 residues: Insulin-like growth factor-binding protein 6 (238 aa).

The signal sequence occupies residues 1 to 25; the sequence is MTWDGLPTQPLLMLLMLLFAAGSGS. In terms of domain architecture, IGFBP N-terminal spans 26–108; the sequence is ALAGCPGCGA…LIGQGRCQRA (83 aa). Disulfide bonds link cysteine 30/cysteine 33, cysteine 41/cysteine 45, cysteine 58/cysteine 64, cysteine 72/cysteine 85, and cysteine 79/cysteine 105. Residues 104–159 form a disordered region; sequence RCQRARGPSEETTKESKPQGGASRSRDTNHRDRQKNPRTSAAPIRPNPVQDSEMGP. Composition is skewed to basic and acidic residues over residues 110-120 and 127-138; these read GPSEETTKESK and RSRDTNHRDRQK. The Thyroglobulin type-1 domain occupies 157–232; that stretch reads MGPCRRHLDS…SPDGQGSTQC (76 aa). Cystine bridges form between cysteine 160–cysteine 188, cysteine 199–cysteine 210, and cysteine 212–cysteine 232. Residues 218–238 are disordered; the sequence is QPLPVSPDGQGSTQCSARSSG. A compositionally biased stretch (polar residues) spans 226-238; sequence GQGSTQCSARSSG.

As to quaternary structure, interacts (via C-terminal domain) with PHB2. Post-translationally, O-glycosylated.

The protein resides in the secreted. In terms of biological role, IGF-binding proteins prolong the half-life of the IGFs and have been shown to either inhibit or stimulate the growth promoting effects of the IGFs on cell culture. They alter the interaction of IGFs with their cell surface receptors. Activates the MAPK signaling pathway and induces cell migration. The chain is Insulin-like growth factor-binding protein 6 (Igfbp6) from Mus musculus (Mouse).